Here is a 629-residue protein sequence, read N- to C-terminus: TRAF3-interacting protein 1 (629 aa).

The tract at residues 130 to 511 (AGDKLDQKGK…RSLVSEASRK (382 aa)) is disordered. The span at 145–306 (SQDKENREGR…KIKAAEEISK (162 aa)) shows a compositional bias: basic and acidic residues. Residues 220–282 (RDREKDKTRE…RREKEKDKER (63 aa)) are a coiled coil. Over residues 352-362 (EQDETESEGEA) the composition is skewed to acidic residues. Residues 394–403 (RPSSARPAAP) are compositionally biased toward low complexity. The segment covering 471-511 (GDDKHGGLVKKILETKKDYESSPSSKSKEQDRSLVSEASRK) has biased composition (basic and acidic residues). A coiled-coil region spans residues 511–602 (KKERELVARE…QLIKDQQDKI (92 aa)).

Belongs to the TRAF3IP1 family. As to quaternary structure, component of the IFT complex B, at least composed of ift20, ift22, ift25, ift27, ift46, ift52, traf3ip1/ift54, ift57, ift74, ift80, ift81, and ift88. Interacts with ift88. Interacts with il13ra1. Binds to microtubules, traf3 and disc1. Interacts with map4.

The protein localises to the cytoplasm. It localises to the cytoskeleton. Its subcellular location is the cell projection. It is found in the cilium. The protein resides in the cilium axoneme. The protein localises to the cilium basal body. In terms of biological role, plays an inhibitory role on IL13 signaling by binding to IL13RA1 and recruits TRAF3 and DISC1 to the microtubules. Involved in the regulation of microtubule cytoskeleton organization. Is a negative regulator of microtubule stability, acting through the control of MAP4 levels. Involved in ciliogenesis. This chain is TRAF3-interacting protein 1 (traf3ip1), found in Danio rerio (Zebrafish).